Reading from the N-terminus, the 384-residue chain is Alpha-2B adrenergic receptor (384 aa).

Residues 1 to 25 (AIAAVITFLILFTIFGNALVILAVL) traverse the membrane as a helical segment. At 26-36 (TSRSLRAPQNL) the chain is on the cytoplasmic side. Residues 37–62 (FLVSLAAADILVATLIIPFSLANELL) form a helical membrane-spanning segment. The Extracellular portion of the chain corresponds to 63–72 (GYWYFRRTWC). The cysteines at positions 72 and 151 are disulfide-linked. The chain crosses the membrane as a helical span at residues 73–95 (EVYLALDVLFCTSSIVHLCAISL). At 96–117 (DRYWAVSRALQYNSKRTPRRIK) the chain is on the cytoplasmic side. A helical membrane pass occupies residues 118 to 140 (CVILTVWLIAAAISLPPLIYKGD). The Extracellular segment spans residues 141 to 156 (QGPQPRGRPQCKLNQE). Residues 157–180 (AWYILSSSIGSFFAPCLIMILVYL) traverse the membrane as a helical segment. Topologically, residues 181–348 (RIYLIAKRSN…LTREKRFTFV (168 aa)) are cytoplasmic. The disordered stretch occupies residues 192 to 289 (RGPRAKGAPR…PEEEEECGSP (98 aa)). Residues 218 to 229 (LANSPTLASSLA) are compositionally biased toward polar residues. Basic and acidic residues predominate over residues 240 to 249 (PPGEKERETP). Residues 349–372 (LAVVIGVFVLCWFPFFFSYSLGAI) traverse the membrane as a helical segment. Topologically, residues 373-381 (CPQHCKVPH) are extracellular. A helical membrane pass occupies residues 382-384 (GLF).

Belongs to the G-protein coupled receptor 1 family. Adrenergic receptor subfamily. ADRA2B sub-subfamily. In terms of assembly, interacts with RAB26. Interacts with PPP1R9B. Interacts with GGA1, GGA2 and GGA3.

It localises to the cell membrane. Its function is as follows. Alpha-2 adrenergic receptors mediate the catecholamine-induced inhibition of adenylate cyclase through the action of G proteins. The chain is Alpha-2B adrenergic receptor (ADRA2B) from Elephas maximus (Indian elephant).